Consider the following 268-residue polypeptide: Phosphatidylglycerol--prolipoprotein diacylglyceryl transferase (268 aa).

7 helical membrane-spanning segments follow: residues 10–30 (VALAIGPLKIHWYGLMYLIGI), 56–76 (LVFWLSMGVIVGGRLGYVLFY), 92–112 (WKGGMSFHGGFIGVMLAALWF), 120–140 (FFELMDFVAPLVPIGLGAGRI), 174–194 (PSQLYQFALEGVALFVILWLF), 202–222 (MAVSGMFSLCYGIFRFAVEFV), and 236–256 (WLTQGQLLCIPMIVGGLVLIW). Arg139 lines the a 1,2-diacyl-sn-glycero-3-phospho-(1'-sn-glycerol) pocket.

It belongs to the Lgt family.

It localises to the cell inner membrane. It catalyses the reaction L-cysteinyl-[prolipoprotein] + a 1,2-diacyl-sn-glycero-3-phospho-(1'-sn-glycerol) = an S-1,2-diacyl-sn-glyceryl-L-cysteinyl-[prolipoprotein] + sn-glycerol 1-phosphate + H(+). It functions in the pathway protein modification; lipoprotein biosynthesis (diacylglyceryl transfer). Catalyzes the transfer of the diacylglyceryl group from phosphatidylglycerol to the sulfhydryl group of the N-terminal cysteine of a prolipoprotein, the first step in the formation of mature lipoproteins. The chain is Phosphatidylglycerol--prolipoprotein diacylglyceryl transferase from Pseudomonas putida (strain ATCC 47054 / DSM 6125 / CFBP 8728 / NCIMB 11950 / KT2440).